The chain runs to 317 residues: Methionyl-tRNA formyltransferase (317 aa).

Position 110-113 (110-113) interacts with (6S)-5,6,7,8-tetrahydrofolate; that stretch reads SLLP.

This sequence belongs to the Fmt family.

The catalysed reaction is L-methionyl-tRNA(fMet) + (6R)-10-formyltetrahydrofolate = N-formyl-L-methionyl-tRNA(fMet) + (6S)-5,6,7,8-tetrahydrofolate + H(+). Attaches a formyl group to the free amino group of methionyl-tRNA(fMet). The formyl group appears to play a dual role in the initiator identity of N-formylmethionyl-tRNA by promoting its recognition by IF2 and preventing the misappropriation of this tRNA by the elongation apparatus. The polypeptide is Methionyl-tRNA formyltransferase (Lactiplantibacillus plantarum (strain ATCC BAA-793 / NCIMB 8826 / WCFS1) (Lactobacillus plantarum)).